Reading from the N-terminus, the 393-residue chain is Chalcone synthase G (393 aa).

Cys164 is a catalytic residue.

The protein belongs to the thiolase-like superfamily. Chalcone/stilbene synthases family. In terms of tissue distribution, expressed in seedlings after illumination with UV light. No expression detectable in flowers. It is not known for sure whether CHSG encodes a chalcone synthase or a very closely related condensing enzyme.

It carries out the reaction (E)-4-coumaroyl-CoA + 3 malonyl-CoA + 3 H(+) = 2',4,4',6'-tetrahydroxychalcone + 3 CO2 + 4 CoA. It functions in the pathway secondary metabolite biosynthesis; flavonoid biosynthesis. Its function is as follows. The primary product of this enzyme is 4,2',4',6'-tetrahydroxychalcone (also termed naringenin-chalcone or chalcone) which can under specific conditions spontaneously isomerize into naringenin. This chain is Chalcone synthase G (CHSG), found in Petunia hybrida (Petunia).